A 221-amino-acid chain; its full sequence is Ribosomal RNA large subunit methyltransferase E (221 aa).

Residues Gly-60, Trp-62, Asp-89, Asp-105, and Asp-134 each coordinate S-adenosyl-L-methionine. Lys-174 serves as the catalytic Proton acceptor.

Belongs to the class I-like SAM-binding methyltransferase superfamily. RNA methyltransferase RlmE family.

Its subcellular location is the cytoplasm. The catalysed reaction is uridine(2552) in 23S rRNA + S-adenosyl-L-methionine = 2'-O-methyluridine(2552) in 23S rRNA + S-adenosyl-L-homocysteine + H(+). Specifically methylates the uridine in position 2552 of 23S rRNA at the 2'-O position of the ribose in the fully assembled 50S ribosomal subunit. The protein is Ribosomal RNA large subunit methyltransferase E of Cupriavidus necator (strain ATCC 17699 / DSM 428 / KCTC 22496 / NCIMB 10442 / H16 / Stanier 337) (Ralstonia eutropha).